The following is a 100-amino-acid chain: Small ribosomal subunit protein uS14c (100 aa).

Belongs to the universal ribosomal protein uS14 family. Part of the 30S ribosomal subunit.

The protein localises to the plastid. The protein resides in the chloroplast. In terms of biological role, binds 16S rRNA, required for the assembly of 30S particles. The chain is Small ribosomal subunit protein uS14c from Cycas taitungensis (Prince sago).